The primary structure comprises 243 residues: Vesicle-associated membrane protein-associated protein B (243 aa).

Alanine 2 is modified (N-acetylalanine). Residues alanine 2 to glutamate 218 are Cytoplasmic-facing. Positions valine 7 to glutamate 124 constitute an MSP domain. Serine 146 is subject to Phosphoserine. Residue lysine 147 forms a Glycyl lysine isopeptide (Lys-Gly) (interchain with G-Cter in SUMO1) linkage. Threonine 150 is subject to Phosphothreonine. Phosphoserine is present on residues serine 158, serine 159, and serine 160. Positions leucine 161–leucine 196 form a coiled coil. The segment covering glutamate 186–arginine 197 has biased composition (basic and acidic residues). The segment at glutamate 186–alanine 214 is disordered. Serine 206 is subject to Phosphoserine. A helical; Anchor for type IV membrane protein transmembrane segment spans residues glycine 219–glycine 239.

This sequence belongs to the VAMP-associated protein (VAP) (TC 9.B.17) family. In terms of assembly, homodimer, and heterodimer with VAPA. Interacts with VAMP1 and VAMP2. Interacts (via MSP domain) with ZFYVE27. Interacts with RMDN3. Interacts with KIF5A in a ZFYVE27-dependent manner. Interacts (via MSP domain) with STARD3 (via phospho-FFAT motif). Interacts with STARD3NL (via FFAT motif). Interacts with CERT1. Interacts with PLEKHA3 and SACM1L to form a ternary complex. Interacts with VPS13A (via FFAT motif). Interacts with RB1CC1 (via phosphorylated FFAT motif), MIGA2 (via phosphorylated FFAT motif), RMDN3 (via phosphorylated FFAT motif), OSBPL1A (via FFAT motif), KCNB1 (via phosphorylated FFAT motif) and KCNB2 (via phosphorylated FFAT motif). Interacts (via MSP domain) with WDR44 (via FFAT motif); the interactions connect the endoplasmic reticulum (ER) with the endosomal tubule.

The protein localises to the endoplasmic reticulum membrane. Endoplasmic reticulum (ER)-anchored protein that mediates the formation of contact sites between the ER and endosomes via interaction with FFAT motif-containing proteins such as STARD3 or WDR44. Interacts with STARD3 in a FFAT motif phosphorylation dependent manner. Via interaction with WDR44 participates in neosynthesized protein export. Participates in the endoplasmic reticulum unfolded protein response (UPR) by inducing ERN1/IRE1 activity. Involved in cellular calcium homeostasis regulation. In Bos taurus (Bovine), this protein is Vesicle-associated membrane protein-associated protein B.